The sequence spans 541 residues: Pseudokinase FAM20A (541 aa).

The N-terminal stretch at 1–33 (MPGLRRDRLLALLLLGALFSADLYFHLWPQVQR) is a signal peptide. Residues asparagine 70, asparagine 145, and asparagine 287 are each glycosylated (N-linked (GlcNAc...) asparagine). 4 disulfide bridges follow: cysteine 314–cysteine 330, cysteine 319–cysteine 323, cysteine 378–cysteine 452, and cysteine 453–cysteine 512. An N-linked (GlcNAc...) asparagine glycan is attached at asparagine 388. N-linked (GlcNAc...) asparagine glycosylation occurs at asparagine 538.

Belongs to the FAM20 family. Interacts with FAM20C; probably forming a heterotetramer of 2 subunits of FAM20A and 2 subunits of FAM20C. N-glycosylated. As to expression, in the mammary gland, expressed at higher levels in lactating mice than in virgin mice. Observed throughout the tissues of the mandibular incisor, including the secretory and maturation stage ameloblasts, the suprabasal layers of the gingival epithelium and the odontoblasts. Weak expression in the enamel matrix.

The protein resides in the secreted. It localises to the golgi apparatus. The protein localises to the endoplasmic reticulum. In terms of biological role, pseudokinase that acts as an allosteric activator of the Golgi serine/threonine protein kinase FAM20C and is involved in biomineralization of teeth. Forms a complex with FAM20C and increases the ability of FAM20C to phosphorylate the proteins that form the 'matrix' that guides the deposition of the enamel minerals. In Mus musculus (Mouse), this protein is Pseudokinase FAM20A.